We begin with the raw amino-acid sequence, 592 residues long: Threonine--tRNA ligase (592 aa).

Residues 193–488 (DHRKLGPALG…LIEHYGGAFP (296 aa)) are catalytic. The Zn(2+) site is built by Cys-284, His-335, and His-465.

The protein belongs to the class-II aminoacyl-tRNA synthetase family. As to quaternary structure, homodimer. It depends on Zn(2+) as a cofactor.

Its subcellular location is the cytoplasm. The enzyme catalyses tRNA(Thr) + L-threonine + ATP = L-threonyl-tRNA(Thr) + AMP + diphosphate + H(+). In terms of biological role, catalyzes the attachment of threonine to tRNA(Thr) in a two-step reaction: L-threonine is first activated by ATP to form Thr-AMP and then transferred to the acceptor end of tRNA(Thr). Also edits incorrectly charged L-seryl-tRNA(Thr). This is Threonine--tRNA ligase from Treponema pallidum (strain Nichols).